Reading from the N-terminus, the 407-residue chain is Probable 2,3-bisphosphoglycerate-independent phosphoglycerate mutase (407 aa).

A disordered region spans residues 175–200 (GSDAINDTDPQQVGKEPLEPKGENPN).

This sequence belongs to the BPG-independent phosphoglycerate mutase family. A-PGAM subfamily.

The catalysed reaction is (2R)-2-phosphoglycerate = (2R)-3-phosphoglycerate. The protein operates within carbohydrate degradation; glycolysis; pyruvate from D-glyceraldehyde 3-phosphate: step 3/5. In terms of biological role, catalyzes the interconversion of 2-phosphoglycerate and 3-phosphoglycerate. The chain is Probable 2,3-bisphosphoglycerate-independent phosphoglycerate mutase from Aquifex aeolicus (strain VF5).